The primary structure comprises 549 residues: Glucose-6-phosphate isomerase 1 (549 aa).

E358 serves as the catalytic Proton donor. Residues H389 and K513 contribute to the active site.

Belongs to the GPI family.

It is found in the cytoplasm. It catalyses the reaction alpha-D-glucose 6-phosphate = beta-D-fructose 6-phosphate. It participates in carbohydrate biosynthesis; gluconeogenesis. It functions in the pathway carbohydrate degradation; glycolysis; D-glyceraldehyde 3-phosphate and glycerone phosphate from D-glucose: step 2/4. Functionally, catalyzes the reversible isomerization of glucose-6-phosphate to fructose-6-phosphate. The protein is Glucose-6-phosphate isomerase 1 of Streptomyces avermitilis (strain ATCC 31267 / DSM 46492 / JCM 5070 / NBRC 14893 / NCIMB 12804 / NRRL 8165 / MA-4680).